Consider the following 377-residue polypeptide: Prostaglandin E synthase 2 (377 aa).

At Met-1 to Arg-57 the chain is on the lumenal side. A helical transmembrane segment spans residues Leu-58–His-74. The Cytoplasmic portion of the chain corresponds to Thr-75–His-377. A Glutaredoxin domain is found at Ser-90–Lys-193. Ser-95 carries the post-translational modification Phosphoserine. Residues Val-148 and Asp-164–Ser-165 contribute to the glutathione site. A GST C-terminal domain is found at Tyr-263–His-377.

It belongs to the GST superfamily. Homodimer. May interact with CEBPB. Interacts with EXOSC10. Post-translationally, synthesized as a Golgi membrane-associated protein, and the proteolytic removal of the N-terminal hydrophobic domain leads to the formation of a mature cytosolic enzyme. Widely expressed. Expressed in the heart, including apex, inter-ventricular septum, both atria and ventricles, but not in the aorta. Also expressed in fetal heart. Detected in various regions of the brain: cerebellum; occipital, frontal and parietal lobes. Also expressed in the lymph nodes, skeletal muscle, kidney and trachea, but not in the thymus or lung. Overexpressed in colorectal cancer.

It is found in the golgi apparatus membrane. The protein resides in the cytoplasm. Its subcellular location is the perinuclear region. It carries out the reaction prostaglandin H2 = prostaglandin E2. The catalysed reaction is prostaglandin H2 = (12S)-hydroxy-(5Z,8E,10E)-heptadecatrienoate + malonaldehyde. It functions in the pathway lipid metabolism; prostaglandin biosynthesis. Its activity is regulated as follows. Isomerase activity is increased by sulfhydril compounds. Dithiothreitol (DTT) is most effective, followed by dihydrolipoic acid, glutathione (GSH) and 2-mercaptoethanol. In terms of biological role, isomerase that catalyzes the conversion of PGH2 into the more stable prostaglandin E2 (PGE2) (in vitro). The biological function and the GSH-dependent property of PTGES2 is still under debate. In vivo, PTGES2 could form a complex with GSH and heme and would not participate in PGE2 synthesis but would catalyze the degradation of prostaglandin E2 H2 (PGH2) to 12(S)-hydroxy-5(Z),8(E),10(E)-heptadecatrienoic acid (HHT) and malondialdehyde (MDA). The sequence is that of Prostaglandin E synthase 2 (PTGES2) from Homo sapiens (Human).